A 199-amino-acid chain; its full sequence is Adenine phosphoribosyltransferase (199 aa).

Belongs to the purine/pyrimidine phosphoribosyltransferase family. As to quaternary structure, homodimer.

Its subcellular location is the cytoplasm. It catalyses the reaction AMP + diphosphate = 5-phospho-alpha-D-ribose 1-diphosphate + adenine. It participates in purine metabolism; AMP biosynthesis via salvage pathway; AMP from adenine: step 1/1. Functionally, catalyzes a salvage reaction resulting in the formation of AMP, that is energically less costly than de novo synthesis. This is Adenine phosphoribosyltransferase from Rhodopseudomonas palustris (strain BisB18).